The chain runs to 298 residues: Protoheme IX farnesyltransferase (298 aa).

A run of 8 helical transmembrane segments spans residues 26 to 46 (IVILLLITGFAAMWVAAGGPP), 48 to 68 (LGLTVVTMIGLALSCGAANAI), 110 to 130 (FLVLLTVNLLTALLATAGLLF), 147 to 167 (IVIGGAAGAAPPLVGWAAVTG), 174 to 194 (VIMFLVVFLWTPPHFWALALF), 220 to 240 (ILLYSLLLIPSAALLYWTGTV), 243 to 263 (LYLWTSVVLGCAMVSASVGLL), and 276 to 296 (TYGWSLLYLFVIFLAMMLDVT).

This sequence belongs to the UbiA prenyltransferase family. Protoheme IX farnesyltransferase subfamily. Interacts with CtaA.

It localises to the cell membrane. The catalysed reaction is heme b + (2E,6E)-farnesyl diphosphate + H2O = Fe(II)-heme o + diphosphate. Its pathway is porphyrin-containing compound metabolism; heme O biosynthesis; heme O from protoheme: step 1/1. Converts heme B (protoheme IX) to heme O by substitution of the vinyl group on carbon 2 of heme B porphyrin ring with a hydroxyethyl farnesyl side group. This is Protoheme IX farnesyltransferase from Symbiobacterium thermophilum (strain DSM 24528 / JCM 14929 / IAM 14863 / T).